Reading from the N-terminus, the 447-residue chain is CBL-interacting serine/threonine-protein kinase 9 (447 aa).

Positions 19–274 constitute a Protein kinase domain; sequence YEMGRTLGEG…IAELLEDEWF (256 aa). ATP is bound by residues 25 to 33 and lysine 48; that span reads LGEGSFAKV. Aspartate 142 functions as the Proton acceptor in the catalytic mechanism. The segment at 160–189 is activation loop; it reads DFGLSAFSRQVREDGLLHTACGTPNYVAPE. Serine 164 is subject to Phosphoserine. Threonine 178 carries the post-translational modification Phosphothreonine. The NAF domain maps to 312–336; that stretch reads EKPVSMNAFELISSSSEFSLENLFE. A PPI region spans residues 343 to 372; sequence KKETRFTSQRSASEIMSKMEETAKPLGFNV.

The protein belongs to the protein kinase superfamily. CAMK Ser/Thr protein kinase family. SNF1 subfamily. As to quaternary structure, interacts with CBL2 and CBL3. It depends on Mn(2+) as a cofactor. As to expression, expressed at low levels in roots and shoots. Detected in root vascular bundles and in the leaf vascular tissue and hydathode, but not in root tips.

The protein resides in the cytoplasm. The protein localises to the nucleus. It carries out the reaction L-seryl-[protein] + ATP = O-phospho-L-seryl-[protein] + ADP + H(+). The enzyme catalyses L-threonyl-[protein] + ATP = O-phospho-L-threonyl-[protein] + ADP + H(+). CIPK serine-threonine protein kinases interact with CBL proteins. Binding of a CBL protein to the regulatory NAF domain of CIPK protein lead to the activation of the kinase in a calcium-dependent manner. Involved in K(+) homeostasis under low-K(+) stress. This chain is CBL-interacting serine/threonine-protein kinase 9 (CIPK9), found in Arabidopsis thaliana (Mouse-ear cress).